The sequence spans 164 residues: CB1 cannabinoid receptor-interacting protein 1 (164 aa).

The protein belongs to the CNRIP family. As to quaternary structure, interacts with the cannabinoid receptor CNR1 (via C-terminus). Does not interact with cannabinoid receptor CNR2.

Suppresses cannabinoid receptor CNR1-mediated tonic inhibition of voltage-gated calcium channels. The sequence is that of CB1 cannabinoid receptor-interacting protein 1 (Cnrip1) from Rattus norvegicus (Rat).